Reading from the N-terminus, the 168-residue chain is Cysteine-rich perinuclear theca protein 1 (168 aa).

The interval 144–168 is disordered; it reads NVSDPEEVPPCLDSDPFPNGDLASS.

As to expression, specifically expressed in spermatozoa (at protein level). Detected from the elongated spermatid stage onwards; not found in immature germ cells or somatic cells (at protein level).

It is found in the cytoplasm. The protein resides in the cytoskeleton. It localises to the perinuclear theca. The polypeptide is Cysteine-rich perinuclear theca protein 1 (Mus musculus (Mouse)).